The sequence spans 182 residues: Putative manganese efflux pump MntP (182 aa).

The next 6 helical transmembrane spans lie at 6 to 26, 37 to 57, 71 to 91, 101 to 121, 131 to 151, and 162 to 182; these read LIPL…VSLG, ILYI…IGMV, HFAG…STIL, IGIS…SVGL, IITI…GLLI, and YGEI…LFPI.

This sequence belongs to the MntP (TC 9.B.29) family.

Its subcellular location is the cell membrane. In terms of biological role, probably functions as a manganese efflux pump. The protein is Putative manganese efflux pump MntP of Bacillus cereus (strain G9842).